A 260-amino-acid polypeptide reads, in one-letter code: DNA repair protein RecO (260 aa).

It belongs to the RecO family.

Its function is as follows. Involved in DNA repair and RecF pathway recombination. The protein is DNA repair protein RecO of Ligilactobacillus salivarius (strain UCC118) (Lactobacillus salivarius).